A 189-amino-acid polypeptide reads, in one-letter code: Photosystem I assembly protein Ycf4 (189 aa).

A run of 2 helical transmembrane segments spans residues 25 to 45 (SVYF…LAGL) and 62 to 82 (LVFI…SLAG).

This sequence belongs to the Ycf4 family.

It is found in the cellular thylakoid membrane. Its function is as follows. Seems to be required for the assembly of the photosystem I complex. This is Photosystem I assembly protein Ycf4 from Synechococcus sp. (strain JA-3-3Ab) (Cyanobacteria bacterium Yellowstone A-Prime).